Here is a 107-residue protein sequence, read N- to C-terminus: Nucleoid-associated protein RC1_2305 (107 aa).

It belongs to the YbaB/EbfC family. Homodimer.

The protein localises to the cytoplasm. It is found in the nucleoid. Its function is as follows. Binds to DNA and alters its conformation. May be involved in regulation of gene expression, nucleoid organization and DNA protection. The protein is Nucleoid-associated protein RC1_2305 of Rhodospirillum centenum (strain ATCC 51521 / SW).